We begin with the raw amino-acid sequence, 325 residues long: NADH-quinone oxidoreductase subunit H (325 aa).

Helical transmembrane passes span 11–31, 81–101, 114–134, 154–174, 186–206, 237–257, 265–285, and 304–324; these read VIIA…CGAF, VIFT…MAIV, IGLL…LFAG, LSYE…AGSF, LWNV…GVAV, FFVG…TLFF, LPPV…FILI, and VCLP…LYTA.

The protein belongs to the complex I subunit 1 family. NDH-1 is composed of 13 different subunits. Subunits NuoA, H, J, K, L, M, N constitute the membrane sector of the complex.

The protein resides in the cell inner membrane. It carries out the reaction a quinone + NADH + 5 H(+)(in) = a quinol + NAD(+) + 4 H(+)(out). NDH-1 shuttles electrons from NADH, via FMN and iron-sulfur (Fe-S) centers, to quinones in the respiratory chain. The immediate electron acceptor for the enzyme in this species is believed to be ubiquinone. Couples the redox reaction to proton translocation (for every two electrons transferred, four hydrogen ions are translocated across the cytoplasmic membrane), and thus conserves the redox energy in a proton gradient. This subunit may bind ubiquinone. The chain is NADH-quinone oxidoreductase subunit H from Erwinia tasmaniensis (strain DSM 17950 / CFBP 7177 / CIP 109463 / NCPPB 4357 / Et1/99).